The sequence spans 269 residues: Myelin protein zero-like protein 1 (269 aa).

The signal sequence occupies residues 1-35 (MAASAGAGAVIAAPDSRRWLWSVLAAALGLLTAGV). In terms of domain architecture, Ig-like V-type spans 36 to 146 (SALEVYTPKE…VKNPPDIVVQ (111 aa)). Topologically, residues 36-162 (SALEVYTPKE…YVVEKENLPV (127 aa)) are extracellular. N-linked (GlcNAc...) asparagine glycosylation is found at Asn50 and Asn130. Cys58 and Cys135 form a disulfide bridge. A helical membrane pass occupies residues 163–183 (FPVWVVVGIVTAVVLGLTLLI). Over 184–269 (SMILAVLYRR…SVVYADIRKN (86 aa)) the chain is Cytoplasmic. Residues 199–238 (DYTGCSTSESLSPVKQAPRKSPSDTEGLVKSLPSGSHQGP) form a disordered region. Residues 202–211 (GCSTSESLSP) show a composition bias toward polar residues. 6 positions are modified to phosphoserine: Ser204, Ser206, Ser208, Ser210, Ser219, and Ser221. The ITIM motif 1 signature appears at 239–244 (VIYAQL). Tyr241 is modified (phosphotyrosine). A Phosphoserine modification is found at Ser260. An ITIM motif 2 motif is present at residues 261-266 (VVYADI). Phosphotyrosine is present on Tyr263.

The protein belongs to the myelin P0 protein family. In terms of assembly, interacts with phosphorylated PTPN11/SHP-2. Post-translationally, phosphorylated on tyrosine residues upon stimulation with pervanadate and concanavalin-A (ConA). Phosphorylation at Tyr-241 and Tyr-263 is required for interaction with PTPN11/SHP-2. Dephosphorylated by PTPN11/SHP-2 (in vitro). N-glycosylated. N-glycosylation is required for concanavalin A binding. As to expression, widely expressed with highest levels in heart, placenta, kidney and pancreas. Isoform 3 is relatively abundant in hematopoietic tissues and fetal liver. Isoform 1 and isoform 3 are expressed in CD14- PB monocytes and pre-B cell progenitors. Isoform 3 appears to be the major isoform in CD34- promyelocytic and promonocytic cells. During differentiation in monocytic cells, the expression level of isoform 3 decreases and that of isoform 1 increases. Isoform 1 is prominent in stromal cells and, to a lesser extent, in umbilical vein endothelial cells and erythroid progenitors. Isoform 2 is expressed in a erythroid progenitor cell line.

It is found in the membrane. In terms of biological role, cell surface receptor, which is involved in signal transduction processes. Recruits PTPN11/SHP-2 to the cell membrane and is a putative substrate of PTPN11/SHP-2. Is a major receptor for concanavalin-A (ConA) and is involved in cellular signaling induced by ConA, which probably includes Src family tyrosine-protein kinases. Isoform 3 seems to have a dominant negative role; it blocks tyrosine phosphorylation of MPZL1 induced by ConA. Isoform 1, but not isoform 2 and isoform 3, may be involved in regulation of integrin-mediated cell motility. The protein is Myelin protein zero-like protein 1 (MPZL1) of Homo sapiens (Human).